The chain runs to 735 residues: MGESPASVVLNASGGLFSLKMETLESELTCPICLELFEDPLLLPCAHSLCFSCAHRILVSSCSSGESIEPITAFQCPTCRYVISLNHRGLDGLKRNVTLQNIIDRFQKASVSGPNSPSESRRERTYRPTTAMSSERIACQFCEQDPPRDAVKTCITCEVSYCDRCLRATHPNKKPFTSHRLVEPVPDTHLRGITCLDHENEKVNMYCVSDDQLICALCKLVGRHRDHQVASLNDRFEKLKQTLEMNLTNLVKRNSELENQMAKLIQICQQVEVNTAMHEAKLMEECDELVEIIQQRKQMIAVKIKETKVMKLRKLAQQVANCRQCLERSTVLINQAEHILKENDQARFLQSAKNIAERVAMATASSQVLIPDINFNDAFENFALDFSREKKLLEGLDYLTAPNPPSIREELCTASHDTITVHWISDDEFSISSYELQYTIFTGQANFISKSWCSWGLWPEIRKCKEAVSCSRLAGAPRGLYNSVDSWMIVPNIKQNHYTVHGLQSGTRYIFIVKAINQAGSRNSEPTRLKTNSQPFKLDPKMTHKKLKISNDGLQMEKDESSLKKSHTPERFSGTGCYGAAGNIFIDSGCHYWEVVMGSSTWYAIGIAYKSAPKNEWIGKNASSWVFSRCNSNFVVRHNNKEMLVDVPPHLKRLGVLLDYDNNMLSFYDPANSLHLHTFDVTFILPVCPTFTIWNKSLMILSGLPAPDFIDYPERQECNCRPQESPYVSGMKTCH.

An RING-type zinc finger spans residues 30–80 (CPICLELFEDPLLLPCAHSLCFSCAHRILVSSCSSGESIEPITAFQCPTCR). The B box-type 1; degenerate zinc-finger motif lies at 137–184 (IACQFCEQDPPRDAVKTCITCEVSYCDRCLRATHPNKKPFTSHRLVEP). The B box-type 2 zinc finger occupies 190–232 (LRGITCLDHENEKVNMYCVSDDQLICALCKLVGRHRDHQVASL). Residues C195, H198, C218, and H224 each contribute to the Zn(2+) site. The stretch at 233–301 (NDRFEKLKQT…IIQQRKQMIA (69 aa)) forms a coiled coil. Residues 340–399 (LKENDQARFLQSAKNIAERVAMATASSQVLIPDINFNDAFENFALDFSREKKLLEGLDYL) form the COS domain. The Fibronectin type-III domain maps to 398–531 (YLTAPNPPSI…RNSEPTRLKT (134 aa)). Positions 516-709 (INQAGSRNSE…ILSGLPAPDF (194 aa)) constitute a B30.2/SPRY domain.

This sequence belongs to the TRIM/RBCC family. As to quaternary structure, homodimer or heterodimer with MID1. Interacts with IGBP1. Phosphorylated on serine and threonine residues. As to expression, low level in fetal kidney and lung, and in adult prostate, ovary and small intestine.

It is found in the cytoplasm. It localises to the cytoskeleton. The enzyme catalyses S-ubiquitinyl-[E2 ubiquitin-conjugating enzyme]-L-cysteine + [acceptor protein]-L-lysine = [E2 ubiquitin-conjugating enzyme]-L-cysteine + N(6)-ubiquitinyl-[acceptor protein]-L-lysine.. Its pathway is protein modification; protein ubiquitination. In terms of biological role, E3 ubiquitin ligase that plays a role in microtubule stabilization. Mediates the 'Lys-48'-linked polyubiquitination of LRRK2 to drive its localization to microtubules and its proteasomal degradation in neurons. This ubiquitination inhibits LRRK2 kinase activation by RAB29. The polypeptide is Probable E3 ubiquitin-protein ligase MID2 (MID2) (Homo sapiens (Human)).